A 654-amino-acid polypeptide reads, in one-letter code: Neuroendocrine convertase 2 (654 aa).

The signal sequence occupies residues 1–21 (MAAATWSWLLAPFLLLHWASA). Residues 22-121 (GAGGGAGGSG…VQQPGFKRVK (100 aa)) constitute a propeptide that is removed on maturation. The Peptidase S8 domain maps to 158–483 (QWYLKNTGQN…FGVLDAGAMV (326 aa)). N-linked (GlcNAc...) asparagine glycosylation is present at asparagine 189. Active-site charge relay system residues include aspartate 196 and histidine 237. Intrachain disulfides connect cysteine 254/cysteine 404 and cysteine 346/cysteine 376. Asparagine 312 carries an N-linked (GlcNAc...) asparagine glycan. Serine 412 functions as the Charge relay system in the catalytic mechanism. A P/Homo B domain is found at 491-627 (SVPPRYHCEA…SLVLHGTKEA (137 aa)). Cysteine 498 and cysteine 524 are oxidised to a cystine. A glycan (N-linked (GlcNAc...) asparagine) is linked at asparagine 544.

The protein belongs to the peptidase S8 family. Furin subfamily. In terms of tissue distribution, expressed in the central nervous system (CNS) and midgut endocrine cells of third instar larva (at protein level). In the CNS, expressed in the CA-LP1 and CA-LP2 neurons which innervate the corpus allatum, and in the CC-MS2 neurons which innervate the corpora cardiaca of the ring gland. Also expressed in the CC-MS1, SP3, Tv and Va neurons. Expressed in Akh-producing cells of the corpora cardiaca. In the embryo, restricted to the final stages of embryogenesis where expression is found in anterior sensory structures and in only 168 cells in the brain and ventral nerve cord. After larvae hatch, the sensory structures and most cells in the CNS turn off or substantially reduce expression. In third instar larva, expressed at higher levels in the anterior section than in the posterior section. Little expression is detected in the adult head. In the developing eye, expressed at higher levels in pale-type R7 photoreceptor cells than in yellow-type R7 cells although expression is not seen in all pale-type R7 cells. Also expressed in outer photoreceptor cells.

The protein resides in the secreted. It catalyses the reaction Release of protein hormones and neuropeptides from their precursors, generally by hydrolysis of -Lys-Arg-|- bonds.. Its function is as follows. Serine endopeptidase which is involved in the processing of hormone and other protein precursors at sites comprised of pairs of basic amino acid residues. Required during embryonic and larval development, probably by proteolytically processing peptide hormones involved in hatching, larval growth and larval molting. Required for the processing and activation of Akh which maintains normal hemolymph sugar levels. Has been shown in one study to be required for processing of sli into slit N-product and slit C-product in the embryo which is necessary for lateral transverse muscle elongation but has been shown in another study not to be required for sli cleavage. Required for larval hatching. Also required for normal larval wandering behavior which occurs prior to pupariation. Required during pupal development for head eversion, leg and wing disk extension, and abdominal differentiation. Required during eye development for R8 photoreceptor cell specification by regulating processing of ligands required for the BMP and activin signaling pathways. The sequence is that of Neuroendocrine convertase 2 from Drosophila melanogaster (Fruit fly).